The following is a 475-amino-acid chain: Ribulose bisphosphate carboxylase large chain (475 aa).

Positions 1–2 (MS) are excised as a propeptide. At P3 the chain carries N-acetylproline. K14 is subject to N6,N6,N6-trimethyllysine. Substrate contacts are provided by N123 and T173. Catalysis depends on K175, which acts as the Proton acceptor. K177 is a substrate binding site. Residues K201, D203, and E204 each contribute to the Mg(2+) site. At K201 the chain carries N6-carboxylysine. H294 acts as the Proton acceptor in catalysis. R295, H327, and S379 together coordinate substrate.

Belongs to the RuBisCO large chain family. Type I subfamily. In terms of assembly, heterohexadecamer of 8 large chains and 8 small chains; disulfide-linked. The disulfide link is formed within the large subunit homodimers. Requires Mg(2+) as cofactor. Post-translationally, the disulfide bond which can form in the large chain dimeric partners within the hexadecamer appears to be associated with oxidative stress and protein turnover.

The protein resides in the plastid. It is found in the chloroplast. The enzyme catalyses 2 (2R)-3-phosphoglycerate + 2 H(+) = D-ribulose 1,5-bisphosphate + CO2 + H2O. The catalysed reaction is D-ribulose 1,5-bisphosphate + O2 = 2-phosphoglycolate + (2R)-3-phosphoglycerate + 2 H(+). In terms of biological role, ruBisCO catalyzes two reactions: the carboxylation of D-ribulose 1,5-bisphosphate, the primary event in carbon dioxide fixation, as well as the oxidative fragmentation of the pentose substrate in the photorespiration process. Both reactions occur simultaneously and in competition at the same active site. The protein is Ribulose bisphosphate carboxylase large chain of Staurastrum punctulatum (Green alga).